Reading from the N-terminus, the 294-residue chain is Polyketide transferase grgF (294 aa).

Residues C115, D240, and H269 contribute to the active site.

Belongs to the polyketide transferase af380 family. In terms of assembly, homodimer.

The protein operates within secondary metabolite biosynthesis. Functionally, polyketide transferase; part of the gene cluster that mediates the biosynthesis of gregatin A, a fungal polyketide featuring an alkylated furanone core. The PKS grgA synthesizes C11 and C4 polyketide chains in the presence and absence of the trans-enoyl reductase grgB, respectively. The polyketide transferase grgF is then responsible for the fusion of the two carbon chains to produce the furanone skeleton of gregatin A. GrgF first undergoes a conformational change to an open form, and the active site Cys-115 is acylated by the C11 chain. After the elimination of the phosphopantetheinyl chain, the second polyketide chain of four carbons long is delivered adjacent to the enzyme-bound C11 chain. The catalytic histidine, His-269, deprotonates a proton from C-2 of the long chain, and the resultant carbanion attacks the C-1 carbonyl of the crotonyl group to perform Claisen condensation, by which the phosphopantetheinyl chain is released. Eventually, hydrolysis of the thioester linkage probably by a His-269-activated water molecule completes the reaction to afford the grgF final product. Next, the cytochrome P450 monooxygenase grgG accepts the unstable grgF final product as substrate and performs the oxidative cyclization to furnish the gregatin scaffold and leads to the formation of desmethylgregatin A. Finally, the O-methyltransferase grgD methylates the carboxyl group of desmethylgregatin A to provide gregatin A. In Penicillium sp, this protein is Polyketide transferase grgF.